The chain runs to 202 residues: Recombination protein RecR (202 aa).

The C4-type zinc finger occupies 61–76 (CARCNSFTEDDICATC). The 96-residue stretch at 84 to 179 (SVLCVVETPA…KVTRLARGVP (96 aa)) folds into the Toprim domain.

This sequence belongs to the RecR family.

May play a role in DNA repair. It seems to be involved in an RecBC-independent recombinational process of DNA repair. It may act with RecF and RecO. This chain is Recombination protein RecR, found in Bordetella petrii (strain ATCC BAA-461 / DSM 12804 / CCUG 43448).